A 256-amino-acid polypeptide reads, in one-letter code: Probable succinate transporter subunit YjjP (256 aa).

Residues 1–113 lie on the Cytoplasmic side of the membrane; the sequence is MQTEQQRAVT…KRFSQIQPLR (113 aa). The chain crosses the membrane as a helical span at residues 114–135; sequence YPRWLVALMVGLSCACFCKLNN. Residues 136–140 are Periplasmic-facing; that stretch reads GGWDG. The chain crosses the membrane as a helical span at residues 141 to 158; sequence AVITFFASTTAMYIRQLL. Over 159–168 the chain is Cytoplasmic; it reads AQRHLHPQIN. Residues 169–189 traverse the membrane as a helical segment; it reads FCLTAFAATTISGLLLQLPTF. At 190–194 the chain is on the periplasmic side; sequence SNTPT. The helical transmembrane segment at 195–215 threads the bilayer; sequence IAMAASVLLLVPGFPLINAVA. The Cytoplasmic portion of the chain corresponds to 216–228; sequence DMFKGHINTGLAR. Residues 229-249 traverse the membrane as a helical segment; it reads WAIASLLTLATCVGVVMALTI. Residues 250-256 lie on the Periplasmic side of the membrane; sequence WGLRGWV.

This sequence belongs to the ThrE exporter (TC 2.A.79) family. The transporter is composed of YjjB and YjjP.

It localises to the cell inner membrane. In terms of biological role, involved in succinate export with YjjB. Both proteins are required for export. Contributes to succinate production under both aerobic and anaerobic conditions. This chain is Probable succinate transporter subunit YjjP (yjjP), found in Escherichia coli (strain K12).